Consider the following 468-residue polypeptide: Siroheme synthase 3 (468 aa).

The segment at 1 to 204 (MDYLPIFCRL…GDSASANQLA (204 aa)) is precorrin-2 dehydrogenase /sirohydrochlorin ferrochelatase. NAD(+)-binding positions include 22–23 (EV) and 43–44 (PE). Serine 128 bears the Phosphoserine mark. The segment at 216 to 468 (GEVVLVGAGP…GAADAALASA (253 aa)) is uroporphyrinogen-III C-methyltransferase. Residue proline 225 coordinates S-adenosyl-L-methionine. The active-site Proton acceptor is the aspartate 248. The Proton donor role is filled by lysine 270. S-adenosyl-L-methionine-binding positions include 301-303 (GGD), isoleucine 306, 331-332 (TA), methionine 383, and glycine 412.

In the N-terminal section; belongs to the precorrin-2 dehydrogenase / sirohydrochlorin ferrochelatase family. The protein in the C-terminal section; belongs to the precorrin methyltransferase family.

The catalysed reaction is uroporphyrinogen III + 2 S-adenosyl-L-methionine = precorrin-2 + 2 S-adenosyl-L-homocysteine + H(+). The enzyme catalyses precorrin-2 + NAD(+) = sirohydrochlorin + NADH + 2 H(+). It carries out the reaction siroheme + 2 H(+) = sirohydrochlorin + Fe(2+). The protein operates within cofactor biosynthesis; adenosylcobalamin biosynthesis; precorrin-2 from uroporphyrinogen III: step 1/1. Its pathway is cofactor biosynthesis; adenosylcobalamin biosynthesis; sirohydrochlorin from precorrin-2: step 1/1. It participates in porphyrin-containing compound metabolism; siroheme biosynthesis; precorrin-2 from uroporphyrinogen III: step 1/1. It functions in the pathway porphyrin-containing compound metabolism; siroheme biosynthesis; siroheme from sirohydrochlorin: step 1/1. The protein operates within porphyrin-containing compound metabolism; siroheme biosynthesis; sirohydrochlorin from precorrin-2: step 1/1. In terms of biological role, multifunctional enzyme that catalyzes the SAM-dependent methylations of uroporphyrinogen III at position C-2 and C-7 to form precorrin-2 via precorrin-1. Then it catalyzes the NAD-dependent ring dehydrogenation of precorrin-2 to yield sirohydrochlorin. Finally, it catalyzes the ferrochelation of sirohydrochlorin to yield siroheme. The protein is Siroheme synthase 3 of Aeromonas hydrophila subsp. hydrophila (strain ATCC 7966 / DSM 30187 / BCRC 13018 / CCUG 14551 / JCM 1027 / KCTC 2358 / NCIMB 9240 / NCTC 8049).